The following is an 859-amino-acid chain: MELQTKSPTTQNDFSQHTPMMRQYLRIKAEYPDLLVFYRMGDFYELFYDDAKKAAKLLNITLTARGQSAGHAIPMAGVPYHAVENYLTKLVRLGESVVICEQIGDPATSKGPVAREVTRIITPGTVSDEALLDEHRDNTLMVIHQEKDRFGIATLDITSGRFLIQEIISENALFAEIERIRPAELLISEENSVHPLKADSIKRRPPWEFDHATALTLLCQQFQTKSLDGFGITHLPLAITAAGCLLQYVNYTQKSALPHIHSIQAEQNEEALFIDANTRRNLELITNLQGEEVHSLAWLLDHTATPMGSRLLRRWINRPLRDQILLQQRQNAVSTLLEKRNYSEIYENLRHIGDLERIVARIALRSARPRDLMQLRQALGVLPTLHQQLTNLPLNKQLQEIKNNLGLFDELFRLLQKAIIENPPIVIRDGGVIADGYDAPLDELRNMSTNSHQFLIDLEQQERERTKINTLKVGYNRIHGYYIEISRAQAKQAPTEYIRRQTLKNVERYITPELKIFEDKVLSSRSRALAREKELYEQLLDTLIEKLIPLQQCASAIANLDVLNTLAERADTLNFNAPQFCDYPIIKIEAGRHPIVENVMTDPFMPNDTHLDEKRRMLIITGPNMGGKSTYMRQTALITLLAYIGSFVPAKNAQLGPIDRIFTRIGAADDLASGRSTFMVEMTETAAILHNATEESLVLMDEVGRGTSTFDGLSLAYACASYLATKLKAFALFATHYFELTALASTLPAVKNVHLDAVEHEEKIIFLHALREGPANKSYGLQVAQLAGIPRSVIQHARQKLEELENPVISETQQPQQNELFLPIENPVLTQLDKLNPDNLTPKQALDILYQLIQLRQQK.

Position 622–629 (622–629) interacts with ATP; it reads GPNMGGKS.

Belongs to the DNA mismatch repair MutS family.

This protein is involved in the repair of mismatches in DNA. It is possible that it carries out the mismatch recognition step. This protein has a weak ATPase activity. The polypeptide is DNA mismatch repair protein MutS (Coxiella burnetii (strain Dugway 5J108-111)).